The sequence spans 98 residues: MSPVYFSFSSAFILGLMGLAFNRSHLLSALLCLEGMMLSLFIAIALWSMTLNSTSCSITPMILLTFSACEASAGLALLVAATRTHGSDHLQNLNLLQC.

Transmembrane regions (helical) follow at residues 1 to 21 (MSPV…GLAF), 26 to 46 (LLSA…AIAL), and 61 to 81 (MILL…LVAA).

Belongs to the complex I subunit 4L family.

The protein resides in the mitochondrion membrane. The catalysed reaction is a ubiquinone + NADH + 5 H(+)(in) = a ubiquinol + NAD(+) + 4 H(+)(out). In terms of biological role, core subunit of the mitochondrial membrane respiratory chain NADH dehydrogenase (Complex I) which catalyzes electron transfer from NADH through the respiratory chain, using ubiquinone as an electron acceptor. Part of the enzyme membrane arm which is embedded in the lipid bilayer and involved in proton translocation. This is NADH-ubiquinone oxidoreductase chain 4L (MT-ND4L) from Squalus acanthias (Spiny dogfish).